We begin with the raw amino-acid sequence, 504 residues long: UDP-GalNAc:beta-1,3-N-acetylgalactosaminyltransferase 2 (504 aa).

The Cytoplasmic portion of the chain corresponds to 1–3 (MRN). Residues 4 to 24 (WLVLLCPCVLGAALHLWHLWL) traverse the membrane as a helical; Signal-anchor for type II membrane protein segment. The Lumenal segment spans residues 25–504 (RSPPDPHNTG…DPCQCEAKVR (480 aa)). N-linked (GlcNAc...) asparagine glycosylation is found at N117 and N176.

It belongs to the glycosyltransferase 31 family. In terms of processing, N-glycosylated. In terms of tissue distribution, present in testis (at protein level). In testis, it is mainly detected in the middle layers of seminiferous tubules at stages XII to II. Strongly expressed in primary and secondary spermatocytes and early round spermatids, but not in spermatogonia, elongating or elongated spermatids, or in Leydig or Sertoli cells.

Its subcellular location is the golgi apparatus membrane. The protein resides in the endoplasmic reticulum. The catalysed reaction is 3-O-(N-acetyl-beta-D-glucosaminyl-(1-&gt;4)-alpha-D-mannosyl)-L-threonyl-[protein] + UDP-N-acetyl-alpha-D-galactosamine = 3-O-[beta-D-GalNAc-(1-&gt;3)-beta-D-GlcNAc-(1-&gt;4)-alpha-D-Man]-L-Thr-[protein] + UDP + H(+). It functions in the pathway protein modification; protein glycosylation. Beta-1,3-N-acetylgalactosaminyltransferase that synthesizes a unique carbohydrate structure, GalNAc-beta-1-3GlcNAc, on N- and O-glycans. Has no galactose nor galactosaminyl transferase activity toward any acceptor substrate. Involved in alpha-dystroglycan (DAG1) glycosylation: acts coordinately with GTDC2/POMGnT2 to synthesize a GalNAc-beta3-GlcNAc-beta-terminus at the 4-position of protein O-mannose in the biosynthesis of the phosphorylated O-mannosyl trisaccharide (N-acetylgalactosamine-beta-3-N-acetylglucosamine-beta-4-(phosphate-6-)mannose), a carbohydrate structure present in alpha-dystroglycan, which is required for binding laminin G-like domain-containing extracellular proteins with high affinity. This is UDP-GalNAc:beta-1,3-N-acetylgalactosaminyltransferase 2 (B3galnt2) from Mus musculus (Mouse).